The chain runs to 286 residues: Myb family transcription factor PHL7 (286 aa).

Residues 12–72 (HASKQRLRWT…HLQKYRLAKY (61 aa)) enclose the HTH myb-type domain. The H-T-H motif DNA-binding region spans 43 to 68 (PKGVLRVMGVQGLTIYHVKSHLQKYR). The tract at residues 74 to 97 (PDSSSEGKKTDKKESGDMLSGLDG) is disordered. Basic and acidic residues predominate over residues 78–89 (SEGKKTDKKESG). Residues 104 to 124 (TEALKLQMEVQKRLHEQLEVQ) adopt a coiled-coil conformation. An LHEQLE motif is present at residues 117 to 122 (LHEQLE). The segment at 152–227 (LGEPSAPVTG…TGEERLSKKP (76 aa)) is disordered.

Belongs to the MYB-CC family.

Its subcellular location is the nucleus. The protein is Myb family transcription factor PHL7 of Arabidopsis thaliana (Mouse-ear cress).